A 946-amino-acid polypeptide reads, in one-letter code: Zinc finger protein rotund (946 aa).

Disordered stretches follow at residues 10-30 and 156-269; these read GPQL…GHSD and FRKP…HNLN. Over residues 161 to 176 the composition is skewed to polar residues; sequence NNNGYSWSTGNNNEVV. A compositionally biased stretch (low complexity) spans 177–188; the sequence is SHSSNGHTNNHP. Polar residues-rich tracts occupy residues 198-230 and 242-269; these read ASAT…SIKS and TCKS…HNLN. C2H2-type zinc fingers lie at residues 488-510, 517-539, 545-567, 573-597, 603-625, and 634-656; these read YQCK…TQIH, YKCT…TRIH, YRCE…IRTH, YKCR…SRCH, FKCN…IPKH, and HICQ…MQKH. Residues 683 to 853 form a disordered region; the sequence is GGSANPANGP…TPSAVGPYDA (171 aa). Composition is skewed to low complexity over residues 739-762 and 770-790; these read HQQQ…QQQQ and HGVP…QQQQ. Over residues 813-822 the composition is skewed to polar residues; the sequence is TAPNGSQSNG. Positions 828 to 841 are enriched in basic and acidic residues; the sequence is QPHHRMPDPVREDI.

It belongs to the krueppel C2H2-type zinc-finger protein family. In terms of assembly, interacts with nab; which acts as a corepressor. In terms of tissue distribution, isoform rn and isoform roe are expressed in non-overlapping domains in the larval imaginal disks. Isoform rn is first expressed during the early third larval instar in the leg, wing, haltere and antennal part of the eye-antennal imaginal disk. It is observed as a ring in the leg and antenna disks and in the presumptive wing pouch and capitellum of wing and haltere disks respectively. In wing disk it is expressed in 3 concentric domains in the wing pouch. In late third instar, expression of isoform rn in the leg disk is no longer evident, but is maintained in the other disks. Isoform roe appears in the third instar and is confined to the eye part of the eye-antennal imaginal disk in a band of 4-6 cells at the morphogenetic furrow. There is no evidence of roe expression in other imaginal disks.

It localises to the nucleus. In terms of biological role, transcription factor involved in imaginal disks development. Isoform rn is required in the wings, antenna, haltere, proboscis and legs disks, while isoform roe is required in the eye disk. Together with nab corepressor, it is involved in the initiation and maintenance of wingless (wg) expression in the wing hinge, by limiting the expression of wg to this compartment. Also required for the epithelial-mesenchymal transition branch of basolateral junctions signaling. This is Zinc finger protein rotund from Drosophila melanogaster (Fruit fly).